The chain runs to 125 residues: Ribosome-binding factor A (125 aa).

It belongs to the RbfA family. In terms of assembly, monomer. Binds 30S ribosomal subunits, but not 50S ribosomal subunits or 70S ribosomes.

The protein localises to the cytoplasm. Its function is as follows. One of several proteins that assist in the late maturation steps of the functional core of the 30S ribosomal subunit. Associates with free 30S ribosomal subunits (but not with 30S subunits that are part of 70S ribosomes or polysomes). Required for efficient processing of 16S rRNA. May interact with the 5'-terminal helix region of 16S rRNA. The protein is Ribosome-binding factor A of Xylella fastidiosa (strain M23).